The following is a 152-amino-acid chain: Deoxyuridine 5'-triphosphate nucleotidohydrolase (152 aa).

Substrate-binding positions include 72–74 (RSG), Asn-85, and 89–91 (TID).

Belongs to the dUTPase family. Mg(2+) is required as a cofactor.

It catalyses the reaction dUTP + H2O = dUMP + diphosphate + H(+). Its pathway is pyrimidine metabolism; dUMP biosynthesis; dUMP from dCTP (dUTP route): step 2/2. Functionally, this enzyme is involved in nucleotide metabolism: it produces dUMP, the immediate precursor of thymidine nucleotides and it decreases the intracellular concentration of dUTP so that uracil cannot be incorporated into DNA. The sequence is that of Deoxyuridine 5'-triphosphate nucleotidohydrolase from Rhodopseudomonas palustris (strain BisB18).